A 1108-amino-acid polypeptide reads, in one-letter code: Valine--tRNA ligase, mitochondrial 1 (1108 aa).

A mitochondrion-targeting transit peptide spans 1 to 46 (MSLLFLRRAKPLFVSCCSATHSRSSFLSPTLTNQLVRSFHGSRTMS). Over residues 57–93 (ELERKKKKEEKAKEKELKKQKALEKERLAELKAKQAK) the composition is skewed to basic and acidic residues. A disordered region spans residues 57–138 (ELERKKKKEE…RKRLSSQMAK (82 aa)). A 'HIGH' region motif is present at residues 177–187 (PNVTGALHIGH). The short motif at 695 to 699 (KMSKS) is the 'KMSKS' region element. Lys698 contacts ATP. Residues 1032-1064 (AINTEAEQEKIRNKIGELQKQKEKLQKMMSVST) are a coiled coil.

The protein belongs to the class-I aminoacyl-tRNA synthetase family.

Its subcellular location is the mitochondrion. The protein localises to the cytoplasm. It is found in the cytosol. The catalysed reaction is tRNA(Val) + L-valine + ATP = L-valyl-tRNA(Val) + AMP + diphosphate. Functionally, required for embryo development and seed viability. This chain is Valine--tRNA ligase, mitochondrial 1, found in Arabidopsis thaliana (Mouse-ear cress).